Reading from the N-terminus, the 354-residue chain is MSVPDRKRALEAAIAYIEKQFGAGSIMSLGKHSSAHEISTIKTGALSLDLALGIGGVPKGRIIEIFGPESSGKTTLATHIVANAQKMGGVAAYIDAEHALDPNYAALIGANINDLMISQPDCGEDALSIAELLARSGAVDVIVIDSVAALVPKSELEGEIGDVHVGLQARMMSQALRKLTATLARTNTCAIFINQIREKIGVSFGNPETTTGGRALKFYSSIRMDIRRIGAIKGGENFDIGNRIKVKVAKNKLAPPFRTAEFDILFNEGISSAGCIIDLAVEKNIIDKKGSWFNYQDRKLGQGREAVREELKRNKELFQELERRIYESVQASSSQALASACLDQEAREVAEAAK.

67–74 is an ATP binding site; the sequence is GPESSGKT.

The protein belongs to the RecA family.

It is found in the cytoplasm. In terms of biological role, can catalyze the hydrolysis of ATP in the presence of single-stranded DNA, the ATP-dependent uptake of single-stranded DNA by duplex DNA, and the ATP-dependent hybridization of homologous single-stranded DNAs. It interacts with LexA causing its activation and leading to its autocatalytic cleavage. The sequence is that of Protein RecA from Chlamydia muridarum (strain MoPn / Nigg).